The primary structure comprises 394 residues: Argininosuccinate synthase (394 aa).

ATP-binding positions include 7–15 and A34; that span reads AYSGGLDTS. L-citrulline is bound by residues Y85 and S90. Position 115 (G115) interacts with ATP. Positions 117, 121, and 122 each coordinate L-aspartate. N121 contributes to the L-citrulline binding site. Residues R125, S176, S185, E261, and Y273 each coordinate L-citrulline.

The protein belongs to the argininosuccinate synthase family. Type 1 subfamily. Homotetramer.

The protein localises to the cytoplasm. The enzyme catalyses L-citrulline + L-aspartate + ATP = 2-(N(omega)-L-arginino)succinate + AMP + diphosphate + H(+). It functions in the pathway amino-acid biosynthesis; L-arginine biosynthesis; L-arginine from L-ornithine and carbamoyl phosphate: step 2/3. The protein is Argininosuccinate synthase of Ehrlichia ruminantium (strain Gardel).